The primary structure comprises 199 residues: MTRCDDSPSASQISITHVTQGSCVASSSPNEVYATILGSCICTCMCDPVAGVGGMNHFLLPSADVEDAQHLRYGSHAMELLINALLKLGAARQRIEAKIFGGAMMTPQLGAIGQANAAFARRYLKDEGIRCTAHSLGGNRARRIRFWPKTGRVQQMFLGSEDVVPNEQPQFRLQGGAGDVTFFDRHNNAEMPDPIKEPR.

The protein belongs to the CheD family.

It carries out the reaction L-glutaminyl-[protein] + H2O = L-glutamyl-[protein] + NH4(+). Its function is as follows. Probably deamidates glutamine residues to glutamate on methyl-accepting chemotaxis receptors (MCPs), playing an important role in chemotaxis. This Cereibacter sphaeroides (strain ATCC 17023 / DSM 158 / JCM 6121 / CCUG 31486 / LMG 2827 / NBRC 12203 / NCIMB 8253 / ATH 2.4.1.) (Rhodobacter sphaeroides) protein is Probable chemoreceptor glutamine deamidase CheD.